Here is a 209-residue protein sequence, read N- to C-terminus: Imidazole glycerol phosphate synthase subunit HisH (209 aa).

The Glutamine amidotransferase type-1 domain maps to 3–209 (SVAVIDYGMG…ANFLTWNGVS (207 aa)). The Nucleophile role is filled by Cys-82. Residues His-187 and Glu-189 contribute to the active site.

Heterodimer of HisH and HisF.

It is found in the cytoplasm. It catalyses the reaction 5-[(5-phospho-1-deoxy-D-ribulos-1-ylimino)methylamino]-1-(5-phospho-beta-D-ribosyl)imidazole-4-carboxamide + L-glutamine = D-erythro-1-(imidazol-4-yl)glycerol 3-phosphate + 5-amino-1-(5-phospho-beta-D-ribosyl)imidazole-4-carboxamide + L-glutamate + H(+). It carries out the reaction L-glutamine + H2O = L-glutamate + NH4(+). Its pathway is amino-acid biosynthesis; L-histidine biosynthesis; L-histidine from 5-phospho-alpha-D-ribose 1-diphosphate: step 5/9. In terms of biological role, IGPS catalyzes the conversion of PRFAR and glutamine to IGP, AICAR and glutamate. The HisH subunit catalyzes the hydrolysis of glutamine to glutamate and ammonia as part of the synthesis of IGP and AICAR. The resulting ammonia molecule is channeled to the active site of HisF. This chain is Imidazole glycerol phosphate synthase subunit HisH, found in Nitrosococcus oceani (strain ATCC 19707 / BCRC 17464 / JCM 30415 / NCIMB 11848 / C-107).